Here is a 947-residue protein sequence, read N- to C-terminus: Beta-glucosidase (947 aa).

Asp696 is a catalytic residue.

Belongs to the glycosyl hydrolase 3 family.

The catalysed reaction is Hydrolysis of terminal, non-reducing beta-D-glucosyl residues with release of beta-D-glucose.. Its pathway is glycan metabolism; cellulose degradation. The chain is Beta-glucosidase from Ruminococcus albus.